The sequence spans 231 residues: Lactate utilization protein C (231 aa).

The protein belongs to the LutC/YkgG family.

Functionally, is involved in L-lactate degradation and allows cells to grow with lactate as the sole carbon source. The chain is Lactate utilization protein C from Macrococcus caseolyticus (strain JCSC5402) (Macrococcoides caseolyticum).